A 906-amino-acid chain; its full sequence is Protein translocase subunit SecA (906 aa).

ATP is bound by residues glutamine 87, 105 to 109 (GEGKT), and aspartate 512. Residues 879 to 906 (REGEKIGRNDPCPCGSGQKYKQCHGKLS) are disordered. Zn(2+)-binding residues include cysteine 890, cysteine 892, cysteine 901, and histidine 902.

This sequence belongs to the SecA family. As to quaternary structure, monomer and homodimer. Part of the essential Sec protein translocation apparatus which comprises SecA, SecYEG and auxiliary proteins SecDF-YajC and YidC. Zn(2+) is required as a cofactor.

Its subcellular location is the cell inner membrane. The protein resides in the cytoplasm. The enzyme catalyses ATP + H2O + cellular proteinSide 1 = ADP + phosphate + cellular proteinSide 2.. Its function is as follows. Part of the Sec protein translocase complex. Interacts with the SecYEG preprotein conducting channel. Has a central role in coupling the hydrolysis of ATP to the transfer of proteins into and across the cell membrane, serving both as a receptor for the preprotein-SecB complex and as an ATP-driven molecular motor driving the stepwise translocation of polypeptide chains across the membrane. This Shewanella frigidimarina (strain NCIMB 400) protein is Protein translocase subunit SecA.